The chain runs to 124 residues: UPF0102 protein HEAR0176 (124 aa).

The protein belongs to the UPF0102 family.

In Herminiimonas arsenicoxydans, this protein is UPF0102 protein HEAR0176.